Here is a 273-residue protein sequence, read N- to C-terminus: Small ribosomal subunit protein uS2 (273 aa).

Belongs to the universal ribosomal protein uS2 family.

In Mycolicibacterium vanbaalenii (strain DSM 7251 / JCM 13017 / BCRC 16820 / KCTC 9966 / NRRL B-24157 / PYR-1) (Mycobacterium vanbaalenii), this protein is Small ribosomal subunit protein uS2.